The following is a 110-amino-acid chain: Iron-sulfur cluster assembly protein CyaY (110 aa).

It belongs to the frataxin family.

Its function is as follows. Involved in iron-sulfur (Fe-S) cluster assembly. May act as a regulator of Fe-S biogenesis. The chain is Iron-sulfur cluster assembly protein CyaY from Paracidovorax citrulli (strain AAC00-1) (Acidovorax citrulli).